Here is a 397-residue protein sequence, read N- to C-terminus: Lysophospholipid transporter LplT (397 aa).

Topologically, residues 1-17 are periplasmic; that stretch reads MSESVHTNTSLWSKGMK. The helical transmembrane segment at 18-38 threads the bilayer; that stretch reads AVIVAQFLSAFGDNALLFATL. At 39–52 the chain is on the cytoplasmic side; sequence ALLKAQFYPEWSQP. Residues 53–73 form a helical membrane-spanning segment; that stretch reads ILQMVFVGAYILFAPFVGQVA. Over 74 to 90 the chain is Periplasmic; it reads DSFAKGRVMMFANGLKL. Residues 91–111 form a helical membrane-spanning segment; that stretch reads LGAASICFGINPFLGYTLVGV. Over 112–144 the chain is Cytoplasmic; the sequence is GAAAYSPAKYGILGELTTGSKLVKANGLMEAST. The chain crosses the membrane as a helical span at residues 145–165; the sequence is IAAILLGSVAGGVLADWHVLV. Ala-166 is a topological domain (periplasmic). A helical transmembrane segment spans residues 167–187; it reads LAACALAYGGAVVANIYIPKL. Topologically, residues 188–226 are cytoplasmic; the sequence is AAARPGQSWNLISMTRSFLNACTSLWRNGETRFSLVGTS. A helical membrane pass occupies residues 227–247; it reads LFWGAGVTLRFLLVLWVPVAL. Residues 248-256 are Periplasmic-facing; the sequence is GITDNATPT. Residues 257 to 277 form a helical membrane-spanning segment; it reads YLNAMVAIGIVVGAGAAAKLV. Topologically, residues 278–280 are cytoplasmic; that stretch reads TLE. Residues 281–301 traverse the membrane as a helical segment; it reads TVSRCMPAGILIGVVVLIFSL. At 302–304 the chain is on the periplasmic side; sequence QHE. Residues 305 to 325 traverse the membrane as a helical segment; that stretch reads LLPAYALLMLIGVLGGFFVVP. Topologically, residues 326–343 are cytoplasmic; that stretch reads LNALLQERGKKSVGAGNA. The chain crosses the membrane as a helical span at residues 344 to 364; it reads IAVQNLGENSAMLLMLGIYSL. The Periplasmic segment spans residues 365-366; it reads AV. Residues 367-387 traverse the membrane as a helical segment; it reads MVGIPVVPIGIGFGALFALAI. Residues 388 to 397 lie on the Cytoplasmic side of the membrane; it reads TALWIWQRRH.

Belongs to the major facilitator superfamily. LplT (TC 2.A.1.42) family.

It localises to the cell inner membrane. Its function is as follows. Catalyzes the facilitated diffusion of 2-acyl-glycero-3-phosphoethanolamine (2-acyl-GPE) into the cell. This is Lysophospholipid transporter LplT from Escherichia coli O7:K1 (strain IAI39 / ExPEC).